Here is a 325-residue protein sequence, read N- to C-terminus: Transaldolase (325 aa).

Lys-125 serves as the catalytic Schiff-base intermediate with substrate.

This sequence belongs to the transaldolase family. Type 2 subfamily.

The protein localises to the cytoplasm. It catalyses the reaction D-sedoheptulose 7-phosphate + D-glyceraldehyde 3-phosphate = D-erythrose 4-phosphate + beta-D-fructose 6-phosphate. The protein operates within carbohydrate degradation; pentose phosphate pathway; D-glyceraldehyde 3-phosphate and beta-D-fructose 6-phosphate from D-ribose 5-phosphate and D-xylulose 5-phosphate (non-oxidative stage): step 2/3. Functionally, transaldolase is important for the balance of metabolites in the pentose-phosphate pathway. The protein is Transaldolase of Campylobacter jejuni subsp. jejuni serotype O:23/36 (strain 81-176).